The chain runs to 737 residues: Palmitoyltransferase akr1 (737 aa).

The tract at residues Met1 to Lys60 is disordered. The Cytoplasmic portion of the chain corresponds to Met1–Lys314. Low complexity predominate over residues Pro7 to Pro38. ANK repeat units lie at residues Glu97–Ala126, Ser131–Leu160, Gln164–Val193, Gln197–Ala226, and Gly230–Ala259. 2 consecutive transmembrane segments (helical) span residues Phe315 to Val335 and Val336 to Lys356. At Ala357–Pro372 the chain is on the cytoplasmic side. Residues Phe373 to Val393 traverse the membrane as a helical segment. At Leu394 to Pro402 the chain is on the lumenal side. Residues Phe403–Met423 form a helical membrane-spanning segment. Residues Val424–Gln500 lie on the Cytoplasmic side of the membrane. The DHHC domain maps to Asn456–Leu506. The S-palmitoyl cysteine intermediate role is filled by Cys486. Residues Phe501–Asn521 traverse the membrane as a helical segment. Residues Tyr522–Thr549 are Lumenal-facing. A helical transmembrane segment spans residues Phe550–Val570. Residues Val571–Val737 lie on the Cytoplasmic side of the membrane.

The protein belongs to the DHHC palmitoyltransferase family. AKR/ZDHHC17 subfamily.

The protein resides in the early endosome membrane. It is found in the golgi apparatus membrane. It carries out the reaction L-cysteinyl-[protein] + hexadecanoyl-CoA = S-hexadecanoyl-L-cysteinyl-[protein] + CoA. Functionally, palmitoyltransferase specific for casein kinase 1. The sequence is that of Palmitoyltransferase akr1 (akr1) from Emericella nidulans (strain FGSC A4 / ATCC 38163 / CBS 112.46 / NRRL 194 / M139) (Aspergillus nidulans).